A 109-amino-acid polypeptide reads, in one-letter code: Nucleoid-associated protein HD_0326 (109 aa).

Belongs to the YbaB/EbfC family. In terms of assembly, homodimer.

The protein resides in the cytoplasm. Its subcellular location is the nucleoid. Functionally, binds to DNA and alters its conformation. May be involved in regulation of gene expression, nucleoid organization and DNA protection. The protein is Nucleoid-associated protein HD_0326 of Haemophilus ducreyi (strain 35000HP / ATCC 700724).